The sequence spans 183 residues: Protein GrpE (183 aa).

Over residues 1 to 14 (MSNEENKINEEALK) the composition is skewed to basic and acidic residues. The disordered stretch occupies residues 1 to 20 (MSNEENKINEEALKQQDAAE).

Belongs to the GrpE family. In terms of assembly, homodimer.

The protein resides in the cytoplasm. Participates actively in the response to hyperosmotic and heat shock by preventing the aggregation of stress-denatured proteins, in association with DnaK and GrpE. It is the nucleotide exchange factor for DnaK and may function as a thermosensor. Unfolded proteins bind initially to DnaJ; upon interaction with the DnaJ-bound protein, DnaK hydrolyzes its bound ATP, resulting in the formation of a stable complex. GrpE releases ADP from DnaK; ATP binding to DnaK triggers the release of the substrate protein, thus completing the reaction cycle. Several rounds of ATP-dependent interactions between DnaJ, DnaK and GrpE are required for fully efficient folding. This chain is Protein GrpE, found in Vibrio vulnificus (strain CMCP6).